Here is a 158-residue protein sequence, read N- to C-terminus: COP9 signalosome complex subunit 9 (158 aa).

Residues 5–119 (LLRNLIEDKT…SVARRATVLE (115 aa)) enclose the PCI domain.

In terms of assembly, component of a COP9 signalosome-like (CSN) complex.

Its subcellular location is the cytoplasm. The protein resides in the nucleus. Component of the COP9 signalosome (CSN) complex that acts as a regulator of the ubiquitin (Ubl) conjugation pathway by mediating the deneddylation of the cullin subunit of SCF-type E3 ubiquitin-protein ligase complexes. The complex is involved in the regulation of the mating pheromone response. The protein is COP9 signalosome complex subunit 9 (CSN9) of Kluyveromyces lactis (strain ATCC 8585 / CBS 2359 / DSM 70799 / NBRC 1267 / NRRL Y-1140 / WM37) (Yeast).